Consider the following 742-residue polypeptide: Protein-associating with the carboxyl-terminal domain of ezrin (742 aa).

G2 carries N-myristoyl glycine lipidation. The Protein kinase domain maps to 2-245 (GSENSALKSY…LCTLLSHDFF (244 aa)). HEAT repeat units follow at residues 199-238 (ESLL…ALCT), 285-323 (LIAS…HAQG), 333-370 (LFQS…HFTQ), and 372-409 (QLKK…LLGP). S439 bears the Phosphoserine mark. Disordered regions lie at residues 506–544 (LSDV…QTVN), 568–598 (SSWD…TSGE), and 629–652 (GDDA…VPSE). Positions 529–539 (WPDWSEPEEPE) are enriched in acidic residues. Residues 548-742 (WPREPCDDVK…GELNWEDNNW (195 aa)) are interaction with EZR. Residue S707 is modified to Phosphoserine. The disordered stretch occupies residues 723-742 (EGEAEGWEEEGELNWEDNNW).

It belongs to the protein kinase superfamily. Interacts with EZR/VIL2 C-terminal domain. Post-translationally, may be myristoylated; myristoylation may target it to Golgi compartment. In terms of processing, phosphorylated. Ubiquitously expressed.

It is found in the cytoplasm. The protein resides in the golgi apparatus. It localises to the cell projection. Its subcellular location is the lamellipodium. Its function is as follows. May play a role in regulating cell adhesion/migration complexes in migrating cells. The protein is Protein-associating with the carboxyl-terminal domain of ezrin (SCYL3) of Homo sapiens (Human).